The sequence spans 389 residues: Dual-specificity RNA methyltransferase RlmN (389 aa).

Glutamate 94 (proton acceptor) is an active-site residue. One can recognise a Radical SAM core domain in the interval 134–367 (PRVRVTQCIS…CFVRRRRGDD (234 aa)). Cysteine 141 and cysteine 372 are oxidised to a cystine. 3 residues coordinate [4Fe-4S] cluster: cysteine 148, cysteine 152, and cysteine 155. S-adenosyl-L-methionine-binding positions include 197 to 198 (GE), serine 229, 253 to 255 (SLH), and asparagine 329. Catalysis depends on cysteine 372, which acts as the S-methylcysteine intermediate.

Belongs to the radical SAM superfamily. RlmN family. The cofactor is [4Fe-4S] cluster.

It localises to the cytoplasm. The catalysed reaction is adenosine(2503) in 23S rRNA + 2 reduced [2Fe-2S]-[ferredoxin] + 2 S-adenosyl-L-methionine = 2-methyladenosine(2503) in 23S rRNA + 5'-deoxyadenosine + L-methionine + 2 oxidized [2Fe-2S]-[ferredoxin] + S-adenosyl-L-homocysteine. It catalyses the reaction adenosine(37) in tRNA + 2 reduced [2Fe-2S]-[ferredoxin] + 2 S-adenosyl-L-methionine = 2-methyladenosine(37) in tRNA + 5'-deoxyadenosine + L-methionine + 2 oxidized [2Fe-2S]-[ferredoxin] + S-adenosyl-L-homocysteine. Its function is as follows. Specifically methylates position 2 of adenine 2503 in 23S rRNA and position 2 of adenine 37 in tRNAs. m2A2503 modification seems to play a crucial role in the proofreading step occurring at the peptidyl transferase center and thus would serve to optimize ribosomal fidelity. This is Dual-specificity RNA methyltransferase RlmN from Sorangium cellulosum (strain So ce56) (Polyangium cellulosum (strain So ce56)).